The following is a 476-amino-acid chain: Exodeoxyribonuclease 7 large subunit (476 aa).

The protein belongs to the XseA family. As to quaternary structure, heterooligomer composed of large and small subunits.

The protein resides in the cytoplasm. The enzyme catalyses Exonucleolytic cleavage in either 5'- to 3'- or 3'- to 5'-direction to yield nucleoside 5'-phosphates.. In terms of biological role, bidirectionally degrades single-stranded DNA into large acid-insoluble oligonucleotides, which are then degraded further into small acid-soluble oligonucleotides. The chain is Exodeoxyribonuclease 7 large subunit from Bartonella tribocorum (strain CIP 105476 / IBS 506).